Reading from the N-terminus, the 579-residue chain is Solute carrier family 15 member 5 (579 aa).

Helical transmembrane passes span 77 to 97 (CQAAILNLCFIGTSILTPVFV), 110 to 130 (LVYICLFLHFLGTALLSVVAF), 154 to 174 (LFYVALLTICLGIGGVRAIVC), 191 to 211 (SFFNWFYWLMNLNATIVFLGI), 221 to 241 (ALVLLIPFMSMLMAVITLHMI), 304 to 324 (TFFLTLLPLFIFQLLYRMCIM), 343 to 363 (GFLLPIAVMNAISSLPLLILA), 386 to 406 (CIIAGNLFAALSVMIAGFFEI), 422 to 442 (VLTVSSMPCFYLILQYVLLGV), 472 to 492 (TLFNGFGCFTGALLVKLVYLI), and 509 to 529 (SFFFFLASLTLLNVLGFCSVS).

Belongs to the major facilitator superfamily. Proton-dependent oligopeptide transporter (POT/PTR) (TC 2.A.17) family.

It localises to the membrane. Functionally, proton oligopeptide cotransporter. The sequence is that of Solute carrier family 15 member 5 (SLC15A5) from Homo sapiens (Human).